A 550-amino-acid chain; its full sequence is Membrane-bound alkaline phosphatase (550 aa).

The N-terminal stretch at 1–39 (MSTWWLVVVAAAAAAGLVRAEDRYHPERLAAGEASAATR) is a signal peptide. Position 83 (aspartate 83) interacts with Mg(2+). Zn(2+) is bound at residue aspartate 83. The active-site Phosphoserine intermediate is serine 133. Histidine 196, serine 198, and glutamate 356 together coordinate Mg(2+). Positions 361, 365, 402, 403, and 479 each coordinate Zn(2+). A lipid anchor (GPI-anchor amidated serine) is attached at serine 524. The propeptide at 525–550 (AATVPTAALLSLLLAAFITLRHQCFL) is removed in mature form.

Belongs to the alkaline phosphatase family. Mg(2+) serves as cofactor. The cofactor is Zn(2+). Midgut.

It is found in the cell membrane. It carries out the reaction a phosphate monoester + H2O = an alcohol + phosphate. This chain is Membrane-bound alkaline phosphatase (Alp-m), found in Bombyx mori (Silk moth).